A 631-amino-acid chain; its full sequence is Shootin-1 (631 aa).

Position 1 is an N-acetylmethionine (Met1). Residues Ser3 and Ser4 each carry the phosphoserine modification. The stretch at 7-353 forms a coiled coil; it reads EKQLQLITSL…RVNQSENSVP (347 aa). Ser101 is subject to Phosphoserine; by PAK1. Ser249 carries the phosphoserine modification. Disordered stretches follow at residues 343–404 and 417–508; these read KRVN…EVTD and IKKG…KSMP. Residues 352 to 369 are compositionally biased toward pro residues; sequence VPPPPPPPPPLPPPPPNP. The residue at position 375 (Ser375) is a Phosphoserine. The span at 456–465 shows a compositional bias: polar residues; that stretch reads LNKSTSSRSL. Ser473 is modified (phosphoserine). A Phosphothreonine modification is found at Thr487. Residues 490-505 show a composition bias toward polar residues; the sequence is ADSSSPTGILATSESK. At Ser494 the chain carries Phosphoserine. A Phosphothreonine modification is found at Thr496. 2 positions are modified to phosphoserine: Ser506 and Ser515. The disordered stretch occupies residues 530 to 631; it reads FNNPCPLTPE…KTGETDSSNC (102 aa). Residue Thr537 is modified to Phosphothreonine. Positions 590 to 602 are enriched in basic and acidic residues; sequence PQTKDQAAEKDPT.

Belongs to the shootin family. In terms of assembly, interacts with L1CAM; this interaction occurs at axonal growth cones. Interacts with actin filament retrograde flow; this interaction is enhanced in a netrin-1- and PAK1-dependent manner and promotes F-actin-substrate coupling and concomitant formation of traction forces at axonal growth cones. Interacts with RUFY3. Interacts with PFN2. Interacts (via N-terminus) with KIF20B; this interaction is direct and promotes the association of SHTN1 to microtubules in primary neurons. Associates with microtubule. Post-translationally, phosphorylated on Ser-101 and Ser-249 by PAK1 through a CDC42- and RAC1-dependent signaling pathway, which enhances its association with F-actin retrograde flow in filopodia and lamellipodia of axonal growth cones. Phosphorylation on Ser-101 and Ser-249 is increased by netrin-1. In terms of tissue distribution, expressed in hippocampal neurons.

It localises to the perikaryon. Its subcellular location is the cell projection. The protein resides in the axon. The protein localises to the growth cone. It is found in the cytoplasm. It localises to the cytoskeleton. Its subcellular location is the filopodium. The protein resides in the lamellipodium. Involved in the generation of internal asymmetric signals required for neuronal polarization and neurite outgrowth. Mediates netrin-1-induced F-actin-substrate coupling or 'clutch engagement' within the axon growth cone through activation of CDC42, RAC1 and PAK1-dependent signaling pathway, thereby converting the F-actin retrograde flow into traction forces, concomitantly with filopodium extension and axon outgrowth. Plays a role in cytoskeletal organization by regulating the subcellular localization of phosphoinositide 3-kinase (PI3K) activity at the axonal growth cone. Also plays a role in regenerative neurite outgrowth. In the developing cortex, cooperates with KIF20B to promote both the transition from the multipolar to the bipolar stage and the radial migration of cortical neurons from the ventricular zone toward the superficial layer of the neocortex. Involved in the accumulation of phosphatidylinositol 3,4,5-trisphosphate (PIP3) in the growth cone of primary hippocampal neurons. The protein is Shootin-1 of Mus musculus (Mouse).